A 460-amino-acid chain; its full sequence is Homocitrate synthase (460 aa).

Positions 3–258 (VGILDSTLRE…IEVVKLNKLQ (256 aa)) constitute a Pyruvate carboxyltransferase domain. A 2-oxoglutarate-binding site is contributed by arginine 11. Glutamate 12 is a binding site for Mg(2+). Residues histidine 75, arginine 135, and threonine 169 each coordinate 2-oxoglutarate. Mg(2+) contacts are provided by histidine 197 and histidine 199. Residue histidine 291 is the Proton acceptor of the active site.

Belongs to the alpha-IPM synthase/homocitrate synthase family. Homocitrate synthase LYS20/LYS21 subfamily. In terms of assembly, forms a homotetramer in the absence of lysine, and is in hexadecamer-octamer equilibrium in the presence of lysine. Requires Mg(2+) as cofactor. Mn(2+) is required as a cofactor.

It catalyses the reaction acetyl-CoA + 2-oxoglutarate + H2O = (2R)-homocitrate + CoA + H(+). Its pathway is amino-acid biosynthesis; L-lysine biosynthesis via AAA pathway; L-alpha-aminoadipate from 2-oxoglutarate: step 1/5. Its activity is regulated as follows. Inhibited by lysine. Catalyzes the aldol-type condensation of 2-oxoglutarate with acetyl-CoA to yield homocitrate. Carries out the first step of the alpha-aminoadipate (AAA) lysine biosynthesis pathway. The chain is Homocitrate synthase from Sulfurisphaera tokodaii (strain DSM 16993 / JCM 10545 / NBRC 100140 / 7) (Sulfolobus tokodaii).